The chain runs to 403 residues: Arginine biosynthesis bifunctional protein ArgJ (403 aa).

Residues threonine 151, lysine 177, threonine 188, glutamate 275, asparagine 398, and serine 403 each contribute to the substrate site. Threonine 188 functions as the Nucleophile in the catalytic mechanism.

It belongs to the ArgJ family. As to quaternary structure, heterotetramer of two alpha and two beta chains.

It is found in the cytoplasm. It carries out the reaction N(2)-acetyl-L-ornithine + L-glutamate = N-acetyl-L-glutamate + L-ornithine. The enzyme catalyses L-glutamate + acetyl-CoA = N-acetyl-L-glutamate + CoA + H(+). The protein operates within amino-acid biosynthesis; L-arginine biosynthesis; L-ornithine and N-acetyl-L-glutamate from L-glutamate and N(2)-acetyl-L-ornithine (cyclic): step 1/1. Its pathway is amino-acid biosynthesis; L-arginine biosynthesis; N(2)-acetyl-L-ornithine from L-glutamate: step 1/4. Functionally, catalyzes two activities which are involved in the cyclic version of arginine biosynthesis: the synthesis of N-acetylglutamate from glutamate and acetyl-CoA as the acetyl donor, and of ornithine by transacetylation between N(2)-acetylornithine and glutamate. The polypeptide is Arginine biosynthesis bifunctional protein ArgJ (Caulobacter vibrioides (strain ATCC 19089 / CIP 103742 / CB 15) (Caulobacter crescentus)).